A 650-amino-acid chain; its full sequence is Zinc finger CCCH domain-containing protein 55 (650 aa).

Residues 67 to 162 (NSPSSTPTSP…THSGSADAAG (96 aa)) are disordered. Positions 105-128 (SPSSPSSTSPWSFNNCINGNNGNN) are enriched in low complexity. The segment covering 141-154 (PFSSHQSNGLSATH) has biased composition (polar residues). Residues 232-254 (PCVYFSRGLCKNGESCKFIHGGY) form a C3H1-type zinc finger. Residues 357–433 (RQIYLTFPAD…RVLVKPYKEK (77 aa)) form the RRM domain. Residues 566–650 (PVVNPMSVNN…PPVTTNNLMQ (85 aa)) form a disordered region. Residues 581–590 (AKEETNKSEL) show a composition bias toward basic and acidic residues.

The chain is Zinc finger CCCH domain-containing protein 55 from Arabidopsis thaliana (Mouse-ear cress).